We begin with the raw amino-acid sequence, 245 residues long: MDKNELVQKAKLAEQAERYDDMAACMKSVTEQGAELSNEERNLLSVAYKNVVGARRSSWRVVSSIEQKTEGAEKKQQMAREYREKIETELRDICNDVLSLLEKFLIPNASQAESKVFYLKMKGDYYRYLAEVAAGDDKKGIVDQSQQAYQEAFEISKKEMQPTHPIRLGLALNFSVFYYEILNSPEKACSLAKTAFDEAIAELDTLSEESYKDSTLIMQLLRDNLTLWTSDTQGDEAEAGEGGEN.

The residue at position 1 (methionine 1) is an N-acetylmethionine. The residue at position 3 (lysine 3) is an N6-acetyllysine. Serine 58 bears the Phosphoserine; by PKA mark. Lysine 68 carries the N6-acetyllysine modification. Residues serine 184, serine 207, and serine 210 each carry the phosphoserine modification. Threonine 232 bears the Phosphothreonine; by CK1 mark.

This sequence belongs to the 14-3-3 family. As to quaternary structure, homodimer. Heterodimerizes with YWHAE. Homo- and heterodimerization is inhibited by phosphorylation on Ser-58. Interacts with FOXO4, NOXA1, SSH1 ARHGEF2, CDK16 and BSPRY. Interacts with WEE1 (C-terminal). Interacts with MLF1 (phosphorylated form); the interaction retains it in the cytoplasm. Interacts with BAX; the interaction occurs in the cytoplasm. Under stress conditions, MAPK8-mediated phosphorylation releases BAX to mitochondria. Interacts with TP53; the interaction enhances p53 transcriptional activity. The Ser-58 phosphorylated form inhibits this interaction and p53 transcriptional activity. Interacts with ABL1 (phosphorylated form); the interaction retains ABL1 in the cytoplasm. Interacts with PKA-phosphorylated AANAT; the interaction modulates AANAT enzymatic activity by increasing affinity for arylalkylamines and acetyl-CoA and protecting the enzyme from dephosphorylation and proteasomal degradation. It may also prevent thiol-dependent inactivation. Interacts with AKT1; the interaction phosphorylates YWHAZ and modulates dimerization. Interacts with GAB2. Interacts with BCL2L11, SAMSN1 and TLK2. Interacts with phosphorylated RAF1; the interaction is inhibited when YWHAZ is phosphorylated on Thr-232. Interacts with Thr-phosphorylated ITGB2. Interacts with the 'Thr-369' phosphorylated form of DAPK2. Interacts with PI4KB, TBC1D22A and TBC1D22B. Interacts with ZFP36L1 (via phosphorylated form); this interaction occurs in a p38 MAPK- and AKT-signaling pathways. Interacts with SLITRK1. Interacts with AK5, LDB1, MADD, MARK3, PDE1A and SMARCB1. Interacts with YWHAZ. Interacts with MEFV. Interacts with ADAM22 (via C-terminus). In terms of processing, the delta, brain-specific form differs from the zeta form in being phosphorylated. Phosphorylation on Ser-184 by MAPK8; promotes dissociation of BAX and translocation of BAX to mitochondria. Phosphorylation on Thr-232; inhibits binding of RAF1. Phosphorylated on Ser-58 by PKA and protein kinase C delta type catalytic subunit in a sphingosine-dependent fashion. Phosphorylation on Ser-58 by PKA; disrupts homodimerization and heterodimerization with YHAE and TP53.

The protein resides in the cytoplasm. The protein localises to the melanosome. Functionally, adapter protein implicated in the regulation of a large spectrum of both general and specialized signaling pathways. Binds to a large number of partners, usually by recognition of a phosphoserine or phosphothreonine motif. Binding generally results in the modulation of the activity of the binding partner. Promotes cytosolic retention and inactivation of TFEB transcription factor by binding to phosphorylated TFEB. Induces ARHGEF7 activity on RAC1 as well as lamellipodia and membrane ruffle formation. In neurons, regulates spine maturation through the modulation of ARHGEF7 activity. The sequence is that of 14-3-3 protein zeta/delta (YWHAZ) from Bos taurus (Bovine).